The primary structure comprises 377 residues: Erythronate-4-phosphate dehydrogenase (377 aa).

2 residues coordinate substrate: S45 and T67. NAD(+) is bound by residues 127–128 (QV), D147, and T176. R209 is an active-site residue. Residue D233 coordinates NAD(+). E238 is an active-site residue. H255 functions as the Proton donor in the catalytic mechanism. G258 is an NAD(+) binding site. Y259 lines the substrate pocket.

The protein belongs to the D-isomer specific 2-hydroxyacid dehydrogenase family. PdxB subfamily. Homodimer.

Its subcellular location is the cytoplasm. It carries out the reaction 4-phospho-D-erythronate + NAD(+) = (R)-3-hydroxy-2-oxo-4-phosphooxybutanoate + NADH + H(+). Its pathway is cofactor biosynthesis; pyridoxine 5'-phosphate biosynthesis; pyridoxine 5'-phosphate from D-erythrose 4-phosphate: step 2/5. Functionally, catalyzes the oxidation of erythronate-4-phosphate to 3-hydroxy-2-oxo-4-phosphonooxybutanoate. The protein is Erythronate-4-phosphate dehydrogenase of Vibrio vulnificus (strain YJ016).